A 62-amino-acid chain; its full sequence is Photosystem II reaction center protein Z (62 aa).

The next 2 helical transmembrane spans lie at 8 to 28 (SVFA…VVLA) and 41 to 61 (FSGA…NSLI).

The protein belongs to the PsbZ family. As to quaternary structure, PSII is composed of 1 copy each of membrane proteins PsbA, PsbB, PsbC, PsbD, PsbE, PsbF, PsbH, PsbI, PsbJ, PsbK, PsbL, PsbM, PsbT, PsbY, PsbZ, Psb30/Ycf12, at least 3 peripheral proteins of the oxygen-evolving complex and a large number of cofactors. It forms dimeric complexes.

It is found in the plastid. It localises to the chloroplast thylakoid membrane. Functionally, may control the interaction of photosystem II (PSII) cores with the light-harvesting antenna, regulates electron flow through the 2 photosystem reaction centers. PSII is a light-driven water plastoquinone oxidoreductase, using light energy to abstract electrons from H(2)O, generating a proton gradient subsequently used for ATP formation. The protein is Photosystem II reaction center protein Z of Psilotum nudum (Whisk fern).